Consider the following 605-residue polypeptide: Branchpoint-bridging protein (605 aa).

Disordered stretches follow at residues 1–75 and 117–139; these read MSST…GENK and VPPE…KRTN. The region spanning 184-264 is the KH domain; sequence YIPVNEYPDI…EKIARAVQLV (81 aa). The tract at residues 294 to 319 is disordered; sequence GTLRDDENYGGAPQSSSGDEMDDRNK. The CCHC-type zinc-finger motif lies at 328–345; sequence IVCHICGSKGHFARDCLE. The segment covering 376–392 has biased composition (polar residues); the sequence is ASQQQSIAQNPNTNNVS. The tract at residues 376–605 is disordered; sequence ASQQQSIAQN…PPPGVIGPPK (230 aa). The segment covering 411 to 424 has biased composition (basic and acidic residues); that stretch reads PMSERGGSFDRFDR. Over residues 428–445 the composition is skewed to polar residues; the sequence is NQSNQREPQQQSHQQNMH. The segment covering 446-466 has biased composition (low complexity); it reads NTNGNNYDRYDRNFNNSSNSS. Residues 468–484 are compositionally biased toward pro residues; that stretch reads ELPPWHRPTPPSQPAAP. Over residues 499–510 the composition is skewed to polar residues; that stretch reads SVQQSMQQSPWN. Pro residues-rich tracts occupy residues 561–581 and 591–605; these read SVPP…PPGV and RHPP…GPPK.

This sequence belongs to the BBP/SF1 family.

It is found in the nucleus. Necessary for the splicing of pre-mRNA. Has a role in the recognition of the branch site (5'-UACUAAC-3'), the pyrimidine tract and the 3'-splice site at the 3'-end of introns. This Yarrowia lipolytica (strain CLIB 122 / E 150) (Yeast) protein is Branchpoint-bridging protein (BBP).